The primary structure comprises 178 residues: Twist-related protein (178 aa).

One can recognise a bHLH domain in the interval 20–71; it reads QQRACANRRERQRTKELNDAFTLLRKLIPSMPSDKMSKIHTLRIATDYISFL.

Efficient DNA binding requires dimerization with another bHLH protein. Homodimer. Forms a heterodimer with hlh-2. In terms of tissue distribution, expressed in defecation-associated muscles and neuron-like cells in the head at the L1 stage. In later larvae, expressed in SM cells and their descendants. Not expressed in differentiated body wall or sex muscles.

The protein resides in the nucleus. Acts as a transcriptional regulator. Involved in postembryonic mesodermal cell fate specification. Activates ceh-24 and egl-15 during mesodermal patterning. This is Twist-related protein (hlh-8) from Caenorhabditis elegans.